We begin with the raw amino-acid sequence, 77 residues long: Acyl carrier protein (77 aa).

Residues 2–77 enclose the Carrier domain; it reads ADTLSRITKI…DVVEYIEGRQ (76 aa). Serine 37 is subject to O-(pantetheine 4'-phosphoryl)serine.

This sequence belongs to the acyl carrier protein (ACP) family. Post-translationally, 4'-phosphopantetheine is transferred from CoA to a specific serine of apo-ACP by AcpS. This modification is essential for activity because fatty acids are bound in thioester linkage to the sulfhydryl of the prosthetic group.

Its subcellular location is the cytoplasm. Its pathway is lipid metabolism; fatty acid biosynthesis. In terms of biological role, carrier of the growing fatty acid chain in fatty acid biosynthesis. The polypeptide is Acyl carrier protein (Halalkalibacterium halodurans (strain ATCC BAA-125 / DSM 18197 / FERM 7344 / JCM 9153 / C-125) (Bacillus halodurans)).